Reading from the N-terminus, the 434-residue chain is Trigger factor (434 aa).

Positions 161-246 constitute a PPIase FKBP-type domain; sequence EDRATLDFTG…LKKVEVRELP (86 aa).

The protein belongs to the FKBP-type PPIase family. Tig subfamily.

It is found in the cytoplasm. The enzyme catalyses [protein]-peptidylproline (omega=180) = [protein]-peptidylproline (omega=0). Involved in protein export. Acts as a chaperone by maintaining the newly synthesized protein in an open conformation. Functions as a peptidyl-prolyl cis-trans isomerase. This chain is Trigger factor, found in Yersinia pseudotuberculosis serotype O:1b (strain IP 31758).